A 576-amino-acid polypeptide reads, in one-letter code: Arginine--tRNA ligase (576 aa).

Positions 126–136 (ANPTGPMHIGH) match the 'HIGH' region motif.

It belongs to the class-I aminoacyl-tRNA synthetase family. Monomer.

Its subcellular location is the cytoplasm. It catalyses the reaction tRNA(Arg) + L-arginine + ATP = L-arginyl-tRNA(Arg) + AMP + diphosphate. The protein is Arginine--tRNA ligase of Rickettsia bellii (strain OSU 85-389).